A 329-amino-acid chain; its full sequence is Beta-ketoacyl-[acyl-carrier-protein] synthase III (329 aa).

Active-site residues include Cys-123 and His-256. The tract at residues 257–261 (QANIR) is ACP-binding. The active site involves Asn-286.

This sequence belongs to the thiolase-like superfamily. FabH family. In terms of assembly, homodimer.

The protein localises to the cytoplasm. The enzyme catalyses malonyl-[ACP] + acetyl-CoA + H(+) = 3-oxobutanoyl-[ACP] + CO2 + CoA. It participates in lipid metabolism; fatty acid biosynthesis. Its function is as follows. Catalyzes the condensation reaction of fatty acid synthesis by the addition to an acyl acceptor of two carbons from malonyl-ACP. Catalyzes the first condensation reaction which initiates fatty acid synthesis and may therefore play a role in governing the total rate of fatty acid production. Possesses both acetoacetyl-ACP synthase and acetyl transacylase activities. Its substrate specificity determines the biosynthesis of branched-chain and/or straight-chain of fatty acids. In Burkholderia mallei (strain NCTC 10247), this protein is Beta-ketoacyl-[acyl-carrier-protein] synthase III.